The sequence spans 102 residues: Pole-localizer protein TmaR (102 aa).

Residues 7–34 (IINQARRKNKLKRELQDNQKKIRDNQKR) adopt a coiled-coil conformation.

It belongs to the pole-localizer TmaR family.

It is found in the cytoplasm. In terms of biological role, pole-localizer protein involved in the regulation of several cellular processes. This Aliivibrio fischeri (strain ATCC 700601 / ES114) (Vibrio fischeri) protein is Pole-localizer protein TmaR.